The primary structure comprises 610 residues: UvrABC system protein C (610 aa).

In terms of domain architecture, GIY-YIG spans 16-94 (SQPGVYRMYD…IKLYQPRYNV (79 aa)). One can recognise a UVR domain in the interval 204–239 (DQVLTQLIARMEKASQDLAFEEAARIRDQIQAVRRV).

Belongs to the UvrC family. Interacts with UvrB in an incision complex.

The protein localises to the cytoplasm. Functionally, the UvrABC repair system catalyzes the recognition and processing of DNA lesions. UvrC both incises the 5' and 3' sides of the lesion. The N-terminal half is responsible for the 3' incision and the C-terminal half is responsible for the 5' incision. This Salmonella enteritidis PT4 (strain P125109) protein is UvrABC system protein C.